The following is an 88-amino-acid chain: Small ribosomal subunit protein bS20 (88 aa).

Belongs to the bacterial ribosomal protein bS20 family.

Its function is as follows. Binds directly to 16S ribosomal RNA. The polypeptide is Small ribosomal subunit protein bS20 (Micrococcus luteus (strain ATCC 4698 / DSM 20030 / JCM 1464 / CCM 169 / CCUG 5858 / IAM 1056 / NBRC 3333 / NCIMB 9278 / NCTC 2665 / VKM Ac-2230) (Micrococcus lysodeikticus)).